Here is a 596-residue protein sequence, read N- to C-terminus: Thioredoxin reductase 1, mitochondrial (596 aa).

Residues 59 to 87 (LTGQRGSRDSTGATGGNAPAGSGAGAPPP) form a disordered region. Positions 68-79 (STGATGGNAPAG) are enriched in low complexity. Residues 120 to 126 (IGGGSAG), 143 to 147 (LDFVK), 159 to 170 (GGTCVNVGCIPK), 233 to 235 (GLG), 262 to 266 (AVGGR), Ser-282, Phe-286, and Tyr-302 each bind FAD. Cys-162 and Cys-167 are joined by a disulfide. Residues 322–328 (VRSIVLR) and Pro-355 each bind NADP(+). Residues 392–399 (RKGLVDDL), 429–432 (VGDI), 438–443 (ELTPVA), and Phe-472 each bind FAD. His-569 functions as the Proton acceptor in the catalytic mechanism. Pro-570 is a binding site for FAD. A disulfide bridge links Cys-594 with Cys-595.

It belongs to the class-I pyridine nucleotide-disulfide oxidoreductase family. As to quaternary structure, homodimer. FAD serves as cofactor. As to expression, during embryogenesis, expression is seen in germ cell progenitors, developing midgut, hindgut and proventriculus.

It is found in the mitochondrion. The protein localises to the cytoplasm. The enzyme catalyses [thioredoxin]-dithiol + NADP(+) = [thioredoxin]-disulfide + NADPH + H(+). Thioredoxin system is a major player in glutathione metabolism, due to the demonstrated absence of a glutathione reductase. Functionally interacts with the Sod/Cat reactive oxidation species (ROS) defense system and thereby has a role in preadult development and life span. Lack of a glutathione reductase suggests antioxidant defense in Drosophila, and probably in related insects, differs fundamentally from that in other organisms. This Drosophila melanogaster (Fruit fly) protein is Thioredoxin reductase 1, mitochondrial.